Consider the following 156-residue polypeptide: Ribosome-binding factor A (156 aa).

Residues 129–156 (AGEAQPYRVEEEPGDSEDETPPSSQDQR) form a disordered region.

Belongs to the RbfA family. In terms of assembly, monomer. Binds 30S ribosomal subunits, but not 50S ribosomal subunits or 70S ribosomes.

The protein resides in the cytoplasm. In terms of biological role, one of several proteins that assist in the late maturation steps of the functional core of the 30S ribosomal subunit. Associates with free 30S ribosomal subunits (but not with 30S subunits that are part of 70S ribosomes or polysomes). Required for efficient processing of 16S rRNA. May interact with the 5'-terminal helix region of 16S rRNA. This Salinispora arenicola (strain CNS-205) protein is Ribosome-binding factor A.